The sequence spans 892 residues: Translation initiation factor IF-2 (892 aa).

Positions 88–305 (KKRTFVKRDP…SLQQGFQKPA (218 aa)) are disordered. Composition is skewed to basic and acidic residues over residues 93-159 (VKRD…KDKV) and 166-216 (DMTK…EENK). Residues 254–269 (GRGRNAKAARPAKKGK) show a composition bias toward basic residues. Basic and acidic residues predominate over residues 270 to 282 (HAESKADREEARA). In terms of domain architecture, tr-type G spans 391-560 (PRAPVVTIMG…LLQAEVLELK (170 aa)). Residues 400–407 (GHVDHGKT) are G1. 400–407 (GHVDHGKT) provides a ligand contact to GTP. The tract at residues 425-429 (GITQH) is G2. A G3 region spans residues 446–449 (DTPG). GTP contacts are provided by residues 446 to 450 (DTPGH) and 500 to 503 (NKID). Residues 500-503 (NKID) form a G4 region. The G5 stretch occupies residues 536 to 538 (SAK).

This sequence belongs to the TRAFAC class translation factor GTPase superfamily. Classic translation factor GTPase family. IF-2 subfamily.

Its subcellular location is the cytoplasm. Functionally, one of the essential components for the initiation of protein synthesis. Protects formylmethionyl-tRNA from spontaneous hydrolysis and promotes its binding to the 30S ribosomal subunits. Also involved in the hydrolysis of GTP during the formation of the 70S ribosomal complex. The polypeptide is Translation initiation factor IF-2 (Salmonella agona (strain SL483)).